The following is a 331-amino-acid chain: Ferrochelatase (331 aa).

Residues histidine 187 and glutamate 286 each coordinate Fe cation.

It belongs to the ferrochelatase family.

The protein localises to the cytoplasm. The catalysed reaction is heme b + 2 H(+) = protoporphyrin IX + Fe(2+). It functions in the pathway porphyrin-containing compound metabolism; protoheme biosynthesis; protoheme from protoporphyrin-IX: step 1/1. Functionally, catalyzes the ferrous insertion into protoporphyrin IX. This Legionella pneumophila (strain Paris) protein is Ferrochelatase.